Consider the following 350-residue polypeptide: UDP-3-O-acylglucosamine N-acyltransferase (350 aa).

H244 (proton acceptor) is an active-site residue.

The protein belongs to the transferase hexapeptide repeat family. LpxD subfamily. As to quaternary structure, homotrimer.

The catalysed reaction is a UDP-3-O-[(3R)-3-hydroxyacyl]-alpha-D-glucosamine + a (3R)-hydroxyacyl-[ACP] = a UDP-2-N,3-O-bis[(3R)-3-hydroxyacyl]-alpha-D-glucosamine + holo-[ACP] + H(+). Its pathway is bacterial outer membrane biogenesis; LPS lipid A biosynthesis. In terms of biological role, catalyzes the N-acylation of UDP-3-O-acylglucosamine using 3-hydroxyacyl-ACP as the acyl donor. Is involved in the biosynthesis of lipid A, a phosphorylated glycolipid that anchors the lipopolysaccharide to the outer membrane of the cell. The sequence is that of UDP-3-O-acylglucosamine N-acyltransferase from Janthinobacterium sp. (strain Marseille) (Minibacterium massiliensis).